Reading from the N-terminus, the 82-residue chain is Small ribosomal subunit protein eS21y (82 aa).

Methionine 1 carries the post-translational modification N-acetylmethionine.

It belongs to the eukaryotic ribosomal protein eS21 family.

This Arabidopsis thaliana (Mouse-ear cress) protein is Small ribosomal subunit protein eS21y (RPS21C).